Consider the following 303-residue polypeptide: 2-dehydropantoate 2-reductase (303 aa).

NADP(+)-binding positions include 7–12, Asn98, and Ala122; that span reads GCGALG. Asn98 contacts substrate. Lys176 functions as the Proton donor in the catalytic mechanism. Positions 180, 184, 194, and 244 each coordinate substrate. Glu256 provides a ligand contact to NADP(+).

Belongs to the ketopantoate reductase family. Monomer.

It is found in the cytoplasm. It carries out the reaction (R)-pantoate + NADP(+) = 2-dehydropantoate + NADPH + H(+). It functions in the pathway cofactor biosynthesis; (R)-pantothenate biosynthesis; (R)-pantoate from 3-methyl-2-oxobutanoate: step 2/2. Functionally, catalyzes the NADPH-dependent reduction of ketopantoate into pantoic acid. The protein is 2-dehydropantoate 2-reductase (panE) of Shigella flexneri.